We begin with the raw amino-acid sequence, 268 residues long: Serine/arginine-rich splicing factor SR30 (268 aa).

2 consecutive RRM domains span residues 7–82 (RTIY…IAHG) and 109–187 (YRVL…EYES). A compositionally biased stretch (basic and acidic residues) spans 186-199 (ESRSVSRSPDDSKS). Residues 186-268 (ESRSVSRSPD…NSPVSPVISG (83 aa)) form a disordered region. A phosphoserine mark is found at S193, S210, S212, S214, S219, S221, S227, S236, S246, S256, and S260. Over residues 207–247 (RGPSCSYSSKSRSVSPARSISPRSRPLSRSRSLYSSVSRSQ) the composition is skewed to low complexity. Residues 257–268 (RSNSPVSPVISG) show a composition bias toward low complexity.

The protein belongs to the splicing factor SR family. SR subfamily. As to quaternary structure, component of the spliceosome. Interacts with SNRNP35, CYP59 and CYP63. In terms of processing, phosphorylated. In terms of tissue distribution, ubiquitous.

Its subcellular location is the nucleus speckle. It is found in the nucleus. The protein resides in the nucleoplasm. The protein localises to the cytoplasm. Its function is as follows. Regulatory splicing factor that modulates alternative splicing and gene expression in specific cell types. Autoregulates its own expression. Probably involved in intron recognition and spliceosome assembly. The chain is Serine/arginine-rich splicing factor SR30 (SR30) from Arabidopsis thaliana (Mouse-ear cress).